A 572-amino-acid chain; its full sequence is Chromatin assembly factor 1 subunit B (572 aa).

WD repeat units lie at residues 11–54 (HNKE…DGKA), 64–103 (RHTK…EPEQ), 127–166 (GHLE…KISI), 169–208 (EHKS…VAFN), 228–279 (FHDD…RPIA), 301–347 (RPVA…PFGY), and 351–392 (IHYH…IPLK). Phosphothreonine is present on Thr-401. Residues 403-572 (DTAKKAKNQT…LAPDDSSKTV (170 aa)) form a disordered region. Polar residues predominate over residues 411-430 (QTHQGSSPGSRSVEGTPSNR). At Ser-416 the chain carries Phosphoserine. A Phosphothreonine modification is found at Thr-426. The segment covering 431-452 (TQDPSSPCTTPSPTTQSPAPSA) has biased composition (low complexity). Ser-436 is modified (phosphoserine). Thr-440 carries the post-translational modification Phosphothreonine. Phosphoserine is present on residues Ser-456 and Ser-465. Lys-501 is modified (N6-acetyllysine). Residues Thr-502 and Thr-510 each carry the phosphothreonine modification. Polar residues predominate over residues 511–529 (PLKTDTVPNPQPNSGTAPS). Residues 546-559 (PELKRPRLEEREGD) are compositionally biased toward basic and acidic residues.

This sequence belongs to the WD repeat HIR1 family. Subunit of the CAF-1 complex that contains RBBP4, CHAF1B and CHAF1A. CHAF1A binds directly to CHAF1B. Interacts with histones H3.1, H3.2 and H3.1t.

The protein localises to the nucleus. The protein resides in the cytoplasm. In terms of biological role, acts as a component of the histone chaperone complex chromatin assembly factor 1 (CAF-1), which assembles histone octamers onto DNA during replication and repair. CAF-1 performs the first step of the nucleosome assembly process, bringing newly synthesized histones H3 and H4 to replicating DNA; histones H2A/H2B can bind to this chromatin precursor subsequent to DNA replication to complete the histone octamer. This is Chromatin assembly factor 1 subunit B from Mus musculus (Mouse).